Here is a 95-residue protein sequence, read N- to C-terminus: Small ribosomal subunit protein bS6 (95 aa).

It belongs to the bacterial ribosomal protein bS6 family.

Binds together with bS18 to 16S ribosomal RNA. The protein is Small ribosomal subunit protein bS6 of Clostridium perfringens (strain ATCC 13124 / DSM 756 / JCM 1290 / NCIMB 6125 / NCTC 8237 / Type A).